The following is a 221-amino-acid chain: Histone H1C (221 aa).

Disordered regions lie at residues 1–43 and 113–221; these read MSDP…PPVS and AAKK…AKKA. The H15 domain occupies 38-112; sequence THPPVSEMVF…GALGSFKLPA (75 aa). 2 stretches are compositionally biased toward basic residues: residues 141–167 and 175–221; these read KVKK…KTTK and AAKK…AKKA.

This sequence belongs to the histone H1/H5 family.

It localises to the nucleus. The protein resides in the chromosome. Histones H1 are necessary for the condensation of nucleosome chains into higher-order structures. This chain is Histone H1C, found in Chironomus tentans (Midge).